The primary structure comprises 327 residues: Methionine import ATP-binding protein MetN (327 aa).

Positions 3 to 239 (VELKNIEKIY…PKHAVTKELL (237 aa)) constitute an ABC transporter domain. 36-43 (GYSGAGKS) lines the ATP pocket.

This sequence belongs to the ABC transporter superfamily. Methionine importer (TC 3.A.1.24) family. In terms of assembly, the complex is composed of two ATP-binding proteins (MetN), two transmembrane proteins (MetI) and a solute-binding protein (MetQ).

The protein localises to the cell inner membrane. It catalyses the reaction L-methionine(out) + ATP + H2O = L-methionine(in) + ADP + phosphate + H(+). It carries out the reaction D-methionine(out) + ATP + H2O = D-methionine(in) + ADP + phosphate + H(+). Its function is as follows. Part of the ABC transporter complex MetNIQ involved in methionine import. Responsible for energy coupling to the transport system. This chain is Methionine import ATP-binding protein MetN, found in Helicobacter pylori (strain ATCC 700392 / 26695) (Campylobacter pylori).